Consider the following 471-residue polypeptide: UDP-glycosyltransferase CGT (471 aa).

H24 serves as the catalytic Proton acceptor. Residue H24 participates in an anthocyanidin binding. Residue D120 is the Charge relay of the active site. Residue T143 coordinates UDP-alpha-D-glucose. Residues 280-281 are UDP; that stretch reads SR. UDP-alpha-D-glucose-binding residues include V343, Q345, H360, W363, N364, S365, and E368. G383 provides a ligand contact to an anthocyanidin. UDP-alpha-D-glucose is bound by residues D384 and Q385.

This sequence belongs to the UDP-glycosyltransferase family.

It catalyses the reaction a 3'-hydro-2'-hydroxy-beta-oxodihydrochalcone + UDP-alpha-D-glucose = a 3'-(beta-D-glucopyranosyl)-2'-hydroxy-beta-oxodihydrochalcone + UDP + H(+). Functionally, UDP-glucose-dependent glucosyltransferase catalyzing the c-glucosylation of 2-hydroxyflavanones. Acts preferentially on the dibenzoylmethane tautomers formed in equilibrium with 2-hydroxyflavanones. No activity with naringenin or naringenin chalcone. The sequence is that of UDP-glycosyltransferase CGT from Oryza sativa subsp. indica (Rice).